Consider the following 529-residue polypeptide: Peptide chain release factor 3 (529 aa).

The region spanning 11 to 280 (AKRRTFAIIS…GLIEWAPQPM (270 aa)) is the tr-type G domain. Residues 20 to 27 (SHPDAGKT), 88 to 92 (DTPGH), and 142 to 145 (NKLD) contribute to the GTP site.

It belongs to the TRAFAC class translation factor GTPase superfamily. Classic translation factor GTPase family. PrfC subfamily.

Its subcellular location is the cytoplasm. Increases the formation of ribosomal termination complexes and stimulates activities of RF-1 and RF-2. It binds guanine nucleotides and has strong preference for UGA stop codons. It may interact directly with the ribosome. The stimulation of RF-1 and RF-2 is significantly reduced by GTP and GDP, but not by GMP. This chain is Peptide chain release factor 3, found in Enterobacter sp. (strain 638).